The primary structure comprises 130 residues: Large ribosomal subunit protein bL20c (130 aa).

This sequence belongs to the bacterial ribosomal protein bL20 family.

Its subcellular location is the plastid. It is found in the chloroplast. In terms of biological role, binds directly to 23S ribosomal RNA and is necessary for the in vitro assembly process of the 50S ribosomal subunit. It is not involved in the protein synthesizing functions of that subunit. This is Large ribosomal subunit protein bL20c from Fagopyrum esculentum subsp. ancestrale (Wild buckwheat).